The sequence spans 366 residues: sn-glycerol-3-phosphate import ATP-binding protein UgpC (366 aa).

The region spanning 4-235 (LSLRNVQKTY…PASTFVAGFI (232 aa)) is the ABC transporter domain. An ATP-binding site is contributed by 37–44 (GPSGCGKS).

This sequence belongs to the ABC transporter superfamily. sn-glycerol-3-phosphate importer (TC 3.A.1.1.3) family. As to quaternary structure, the complex is composed of two ATP-binding proteins (UgpC), two transmembrane proteins (UgpA and UgpE) and a solute-binding protein (UgpB).

The protein localises to the cell inner membrane. It carries out the reaction sn-glycerol 3-phosphate(out) + ATP + H2O = sn-glycerol 3-phosphate(in) + ADP + phosphate + H(+). Part of the ABC transporter complex UgpBAEC involved in sn-glycerol-3-phosphate (G3P) import. Responsible for energy coupling to the transport system. This Cupriavidus necator (strain ATCC 17699 / DSM 428 / KCTC 22496 / NCIMB 10442 / H16 / Stanier 337) (Ralstonia eutropha) protein is sn-glycerol-3-phosphate import ATP-binding protein UgpC.